We begin with the raw amino-acid sequence, 387 residues long: 1-deoxy-D-xylulose 5-phosphate reductoisomerase (387 aa).

NADPH contacts are provided by Thr-11, Gly-12, Ser-13, Ile-14, Gly-37, Arg-39, and Asn-123. Residue Lys-124 coordinates 1-deoxy-D-xylulose 5-phosphate. Residue Glu-125 coordinates NADPH. Asp-147 is a binding site for Mn(2+). 1-deoxy-D-xylulose 5-phosphate contacts are provided by Ser-148, Glu-149, Ser-173, and His-196. Glu-149 provides a ligand contact to Mn(2+). Gly-202 contributes to the NADPH binding site. 1-deoxy-D-xylulose 5-phosphate is bound by residues Ser-209, Asn-214, Lys-215, and Glu-218. Mn(2+) is bound at residue Glu-218.

Belongs to the DXR family. Requires Mg(2+) as cofactor. The cofactor is Mn(2+).

It carries out the reaction 2-C-methyl-D-erythritol 4-phosphate + NADP(+) = 1-deoxy-D-xylulose 5-phosphate + NADPH + H(+). It participates in isoprenoid biosynthesis; isopentenyl diphosphate biosynthesis via DXP pathway; isopentenyl diphosphate from 1-deoxy-D-xylulose 5-phosphate: step 1/6. Catalyzes the NADPH-dependent rearrangement and reduction of 1-deoxy-D-xylulose-5-phosphate (DXP) to 2-C-methyl-D-erythritol 4-phosphate (MEP). The chain is 1-deoxy-D-xylulose 5-phosphate reductoisomerase from Corynebacterium diphtheriae (strain ATCC 700971 / NCTC 13129 / Biotype gravis).